Consider the following 88-residue polypeptide: Stannin (88 aa).

Residues methionine 1 to threonine 10 are Mitochondrial intermembrane-facing. A helical membrane pass occupies residues glycine 11–glycine 31. Over cysteine 32–glycine 88 the chain is Cytoplasmic. Serine 49 is subject to Phosphoserine.

It belongs to the stannin family. As to quaternary structure, monomer.

The protein resides in the mitochondrion outer membrane. In terms of biological role, plays a role in the toxic effects of organotins. Plays a role in endosomal maturation. This Homo sapiens (Human) protein is Stannin (SNN).